A 353-amino-acid chain; its full sequence is Mitochondrial import inner membrane translocase subunit TIM50 (353 aa).

The N-terminal 44 residues, 1 to 44 (MAASAAVFSRLRSGLRLGSRGLCTRLATPPRRAPDQAAEIGSRG), are a transit peptide targeting the mitochondrion. Positions 25–60 (RLATPPRRAPDQAAEIGSRGSTKAQGPQQQPGSEGP) are disordered. At Ser-45 the chain carries Phosphoserine. Residues 45 to 65 (STKAQGPQQQPGSEGPSYAKK) lie on the Mitochondrial matrix side of the membrane. The span at 49–60 (QGPQQQPGSEGP) shows a compositional bias: low complexity. A helical membrane pass occupies residues 66 to 86 (VALWLAGLLGAGGTVSVVYIF). At 87–353 (GNNPVDENGA…SRLWPRSKQP (267 aa)) the chain is on the mitochondrial intermembrane side. An FCP1 homology domain is found at 143–286 (YYQPPYTLVL…LDLSAFLKTI (144 aa)). Ser-341 bears the Phosphoserine mark.

It belongs to the TIM50 family. Component of the TIM23 complex at least composed of TIMM23, TIMM17 (TIMM17A or TIMM17B) and TIMM50; within this complex, directly interacts with TIMM23. The complex interacts with the TIMM44 component of the PAM complex and with DNAJC15. As to quaternary structure, interacts with COIL and snRNPs. In terms of tissue distribution, widely expressed. Expressed at higher level in brain, kidney and liver (at protein level).

The protein resides in the mitochondrion inner membrane. It is found in the nucleus speckle. In terms of biological role, essential component of the TIM23 complex, a complex that mediates the translocation of transit peptide-containing proteins across the mitochondrial inner membrane. Has some phosphatase activity in vitro; however such activity may not be relevant in vivo. Functionally, may participate in the release of snRNPs and SMN from the Cajal body. In Homo sapiens (Human), this protein is Mitochondrial import inner membrane translocase subunit TIM50 (TIMM50).